Here is an 85-residue protein sequence, read N- to C-terminus: SKP1-like protein 6 (85 aa).

Residues 65–85 (MMAANYLNIQSLLDLTFSNCR) are interaction with the F-box domain of F-box proteins.

This sequence belongs to the SKP1 family. In terms of assembly, part of a SCF (SKP1-cullin-F-box) protein ligase complex.

The protein localises to the nucleus. The protein operates within protein modification; protein ubiquitination. Functionally, involved in ubiquitination and subsequent proteasomal degradation of target proteins. Together with CUL1, RBX1 and a F-box protein, it forms a SCF E3 ubiquitin ligase complex. The functional specificity of this complex depends on the type of F-box protein. In the SCF complex, it serves as an adapter that links the F-box protein to CUL1. The chain is SKP1-like protein 6 (ASK6) from Arabidopsis thaliana (Mouse-ear cress).